A 191-amino-acid polypeptide reads, in one-letter code: Protein phosphatase inhibitor 2 (191 aa).

Residues 20-31 (ESNKPVRQKITE) show a composition bias toward basic and acidic residues. Disordered stretches follow at residues 20–52 (ESNKPVRQKITEPKTPYHPMMDDDGSLSPRGRA) and 67–191 (RNVL…PELI). Ser-45 and Ser-47 each carry phosphoserine. The span at 93 to 109 (SDEEEEEADPMDQDEEG) shows a compositional bias: acidic residues. Over residues 114 to 136 (KNERFNAHRKAHYDEFRKVKELR) the composition is skewed to basic and acidic residues.

Interacts with protein phosphatase 1. Interacts with TOPP1, SRK2D/SNRK2.2, SRK2I/SNRK2.3, SRK2E/SNRK2.6, SRK2C/SNRK2.8 and PYL11. In terms of processing, phosphorylated in vivo. In terms of tissue distribution, expressed in roots, cotyledons, leaves, flowers and siliques.

It localises to the nucleus. The protein resides in the cytoplasm. Its function is as follows. Inhibitor of protein-phosphatase 1 (PP1). Binds to and inhibits PP1 activity. Acts as negative regulator of abscisic acid (ABA) signaling. Enhances the inhibition of SRK2E/SNRK2.6 by TOPP1. May promote the interaction between TOPP1 and the ABA receptor PYL11. This is Protein phosphatase inhibitor 2 from Arabidopsis thaliana (Mouse-ear cress).